A 366-amino-acid chain; its full sequence is MIKIAIDVMGGDFAPLEIVKGTLLALNKNKEIHVVLYGNQKLITPLIEKTPFFGNNQITIKHTPYFLRSADKNIRDQLKATPNASLFLALEAAKQDEVQGVVSAGATQTLVLASHLILKKMPLMQRIAIAPMFNSFDNRTRILLDAGANTELKPQHLHTFANYATIIAKEILEIPNPQIKLLNIGTEPTKGRALELETYQLLSQDSNLNFGGNEEPQNLLTTSADILLSDGFTANIALKTYEGTMLNFMNHFKTILTKNLIKKMATKTLFQKPLQQLKNQLDPRQIGGAMLLGLNKIVIKAHGSSQAYAFCQAILQAQKLIKAQVNQKIAHSLESAKNKETQSKQASTKNTAPKTSETTKESQQSL.

The disordered stretch occupies residues 334-366; it reads ESAKNKETQSKQASTKNTAPKTSETTKESQQSL. Positions 343–366 are enriched in polar residues; sequence SKQASTKNTAPKTSETTKESQQSL.

Belongs to the PlsX family. As to quaternary structure, homodimer. Probably interacts with PlsY.

It is found in the cytoplasm. It carries out the reaction a fatty acyl-[ACP] + phosphate = an acyl phosphate + holo-[ACP]. It participates in lipid metabolism; phospholipid metabolism. Its function is as follows. Catalyzes the reversible formation of acyl-phosphate (acyl-PO(4)) from acyl-[acyl-carrier-protein] (acyl-ACP). This enzyme utilizes acyl-ACP as fatty acyl donor, but not acyl-CoA. This chain is Phosphate acyltransferase, found in Onion yellows phytoplasma (strain OY-M).